A 470-amino-acid polypeptide reads, in one-letter code: Sulfate adenylyltransferase subunit 1 (470 aa).

One can recognise a tr-type G domain in the interval 22–237; sequence KEVLRFITCG…LEEVPVKSEE (216 aa). The G1 stretch occupies residues 31–38; it reads GSVDDGKS. 31 to 38 lines the GTP pocket; sequence GSVDDGKS. The tract at residues 89-93 is G2; sequence GITID. Positions 110-113 are G3; the sequence is DTPG. GTP is bound by residues 110 to 114 and 165 to 168; these read DTPGH and NKMD. The interval 165–168 is G4; sequence NKMD. Residues 202–204 form a G5 region; sequence SAK.

The protein belongs to the TRAFAC class translation factor GTPase superfamily. Classic translation factor GTPase family. CysN/NodQ subfamily. As to quaternary structure, heterodimer composed of CysD, the smaller subunit, and CysN.

The catalysed reaction is sulfate + ATP + H(+) = adenosine 5'-phosphosulfate + diphosphate. It participates in sulfur metabolism; hydrogen sulfide biosynthesis; sulfite from sulfate: step 1/3. In terms of biological role, with CysD forms the ATP sulfurylase (ATPS) that catalyzes the adenylation of sulfate producing adenosine 5'-phosphosulfate (APS) and diphosphate, the first enzymatic step in sulfur assimilation pathway. APS synthesis involves the formation of a high-energy phosphoric-sulfuric acid anhydride bond driven by GTP hydrolysis by CysN coupled to ATP hydrolysis by CysD. The chain is Sulfate adenylyltransferase subunit 1 from Methylorubrum populi (strain ATCC BAA-705 / NCIMB 13946 / BJ001) (Methylobacterium populi).